A 557-amino-acid polypeptide reads, in one-letter code: Formate--tetrahydrofolate ligase 2 (557 aa).

An ATP-binding site is contributed by 66–73; sequence TPAGEGKT.

The protein belongs to the formate--tetrahydrofolate ligase family.

It catalyses the reaction (6S)-5,6,7,8-tetrahydrofolate + formate + ATP = (6R)-10-formyltetrahydrofolate + ADP + phosphate. It functions in the pathway one-carbon metabolism; tetrahydrofolate interconversion. The chain is Formate--tetrahydrofolate ligase 2 from Streptococcus pyogenes serotype M5 (strain Manfredo).